A 337-amino-acid polypeptide reads, in one-letter code: Inositol 2-dehydrogenase 1 (337 aa).

Belongs to the Gfo/Idh/MocA family. As to quaternary structure, homotetramer.

The catalysed reaction is myo-inositol + NAD(+) = scyllo-inosose + NADH + H(+). In terms of biological role, involved in the oxidation of myo-inositol (MI) to 2-keto-myo-inositol (2KMI or 2-inosose). The sequence is that of Inositol 2-dehydrogenase 1 from Paenarthrobacter aurescens (strain TC1).